Consider the following 389-residue polypeptide: ELAV-like protein 2 (389 aa).

3 RRM domains span residues 66–145 (TNLI…YARP), 153–233 (ANLY…FANN), and 306–384 (WCIF…FKTS).

This sequence belongs to the RRM elav family. In terms of assembly, part of a ribonucleoprotein (RNP) complex, at least composed of elavl1/elrA and/or elavl2/elrB, igf2bp3/vg1RBP, ddx6/Xp54, ybx2/frgy2, lsm14b/rap55b and, in a subset of RNP complexes, stau1/staufen. Binds RNA as a homooligomer. In terms of tissue distribution, expressed in brain, testis and ovary. Ovarian expression is restricted to follicle cells surrounding the oocyte. From the early tailbud stage, expression is neural-specific and is seen in both the central and peripheral nervous system in differentiating neurons but not proliferating precursors. Expressed in the retina from stage 32 with expression becoming restricted to the ganglion cell layer by later stages.

It is found in the cytoplasm. The protein resides in the cell cortex. In terms of biological role, binds to poly-U elements and AU-rich elements (AREs) in the 3'-UTR of target mRNAs. Required for the vegetal localization of vg1 mRNA. Probably required for nervous system development. The polypeptide is ELAV-like protein 2 (elavl2) (Xenopus laevis (African clawed frog)).